The chain runs to 906 residues: Disintegrin and metalloproteinase domain-containing protein 22 (906 aa).

The N-terminal stretch at 1 to 25 (MQAAVAVSVPFLLLCVLGTCPPARC) is a signal peptide. Residues 26 to 222 (GQAGDASLME…KFILKPRPKR (197 aa)) constitute a propeptide that is removed on maturation. Asparagine 175 is a glycosylation site (N-linked (GlcNAc...) asparagine). Residues 223–736 (SKRQLRRYPR…LSGNGVAGTN (514 aa)) lie on the Extracellular side of the membrane. A Peptidase M12B domain is found at 239–438 (KYIELMIVND…GGGACLFNKP (200 aa)). Cystine bridges form between cysteine 349–cysteine 433, cysteine 392–cysteine 417, cysteine 394–cysteine 401, cysteine 447–cysteine 477, cysteine 458–cysteine 474, cysteine 460–cysteine 466, cysteine 473–cysteine 494, cysteine 485–cysteine 491, cysteine 490–cysteine 516, cysteine 503–cysteine 523, cysteine 510–cysteine 542, cysteine 535–cysteine 547, cysteine 554–cysteine 605, cysteine 569–cysteine 635, cysteine 583–cysteine 593, cysteine 600–cysteine 663, and cysteine 657–cysteine 668. In terms of domain architecture, Disintegrin spans 444 to 531 (PPECGNGFIE…QCAPNIHKMD (88 aa)). Asparagine 519 is a glycosylation site (N-linked (GlcNAc...) asparagine). Asparagine 634 is a glycosylation site (N-linked (GlcNAc...) asparagine). Asparagine 675 is a glycosylation site (N-linked (GlcNAc...) asparagine). Residues 675–712 (NFSTCLSSKEGTICSGNGVCSNELKCVCNRHWIGSDCN) enclose the EGF-like domain. 3 disulfides stabilise this stretch: cysteine 679/cysteine 694, cysteine 688/cysteine 700, and cysteine 702/cysteine 711. Residues 737–757 (IIIGIIAGTILVLALILGITA) traverse the membrane as a helical segment. Residues 758–906 (WGYKNYREQR…QSARLWETSI (149 aa)) lie on the Cytoplasmic side of the membrane. Residues 785-906 (YSDIPPGVST…QSARLWETSI (122 aa)) are disordered. A compositionally biased stretch (low complexity) spans 793–810 (STNSASSSKKRSNGLSHS). Serine 810 bears the Phosphoserine mark. Residues 811-829 (WSERIPDTKHISDICENGR) are compositionally biased toward basic and acidic residues. The residue at position 834 (serine 834) is a Phosphoserine. A compositionally biased stretch (basic residues) spans 842 to 853 (NKKKIRGKRFRP). Phosphoserine occurs at positions 857, 862, 866, and 870. Over residues 862–877 (SPAKSPSSSTGSIASS) the composition is skewed to low complexity.

Interacts with LGI1. Interacts with DLG4/PSD95. Also binds LGI4. Interacts with KCNA2 and DLG2. Interacts with ADAM11. Interacts (via C-terminus) with YWHAB/14-3-3 beta. Interacts (via C-terminus) with YWHAZ/14-3-3 zeta. The precursor is cleaved by a furin endopeptidase. In terms of tissue distribution, highly expressed in the brain and in some high-grade but not low-grade gliomas. Detected slightly or not at all in other tissues.

It is found in the cell membrane. Its subcellular location is the cell projection. It localises to the axon. Probable ligand for integrin in the brain. This is a non catalytic metalloprotease-like protein. Involved in regulation of cell adhesion and spreading and in inhibition of cell proliferation. Neuronal receptor for LGI1. In Homo sapiens (Human), this protein is Disintegrin and metalloproteinase domain-containing protein 22 (ADAM22).